Consider the following 526-residue polypeptide: Importin subunit alpha-1a (526 aa).

The IBB domain maps to 1–58 (MSLRPSERVEVRRNRYKVAVDAEEGRRRREDNMVEIRKSRREESLLKKRREGLQAQAP). 8 ARM repeats span residues 105–145 (SPPI…NIAS), 148–187 (SENT…NVAG), 190–230 (PKCR…NFCR), 232–271 (KPQP…YLSD), 274–313 (NDKI…NIVT), 316–356 (DAQT…NITA), 359–398 (KDQI…NATS), and 402–441 (HDQI…NILK).

It belongs to the importin alpha family. As to quaternary structure, forms a complex with importin subunit beta-1. The whole complex, most stable and composed of importin alpha, importin beta and NLS substrate, is referred to as PTAC or pore targeting complex. Interacts with mungbean yellow mosaic virus capsid protein. As to expression, highly expressed in callus, followed by root and etiolated leaf. Low expression in green leaf.

It localises to the cytoplasm. Its subcellular location is the perinuclear region. Its function is as follows. Functions in nuclear protein import. Binds specifically and directly to substrates containing either a simple or bipartite NLS motif. Promotes docking of import substrates to the nuclear envelope. The sequence is that of Importin subunit alpha-1a from Oryza sativa subsp. japonica (Rice).